Reading from the N-terminus, the 578-residue chain is Probable lysosomal cobalamin transporter (578 aa).

2 helical membrane-spanning segments follow: residues 8–28 (LIWV…SVFI) and 46–66 (IFAI…VALV). Residue Asn-70 is glycosylated (N-linked (GlcNAc...) asparagine). Helical transmembrane passes span 95–115 (VVYY…IPFT) and 145–165 (TITF…VPVA). Residue Asn-168 is glycosylated (N-linked (GlcNAc...) asparagine). 6 helical membrane passes run 188-208 (ALTF…VLYT), 312-332 (LLGG…MLLT), 347-367 (GYIL…VQAA), 375-395 (VIFT…IAIV), 419-439 (LTTA…SMVV), and 506-526 (FFGV…LIVV). Positions 539 to 578 (RQMDEDAEEAEEEGLLASTGRRLDTAWQDITGRSNRQRDS) are disordered. The segment covering 540–552 (QMDEDAEEAEEEG) has biased composition (acidic residues).

The protein belongs to the LIMR family. LMBRD1 subfamily.

The protein resides in the lysosome membrane. In terms of biological role, probable lysosomal cobalamin transporter. Required to export cobalamin from lysosomes allowing its conversion to cofactors. This Aspergillus terreus (strain NIH 2624 / FGSC A1156) protein is Probable lysosomal cobalamin transporter.